We begin with the raw amino-acid sequence, 343 residues long: UBP1-associated proteins 1A (343 aa).

Residues 1-61 (MAKTLDKSKK…SESDNEFDPE (61 aa)) form a disordered region. Positions 28 to 49 (NKQQQQPESSTPYSSSSSSSDS) are enriched in low complexity. Residues 50–61 (SDSESDNEFDPE) show a composition bias toward acidic residues. An RRM domain is found at 104–181 (RKIFVYGLPW…RTATCQLASM (78 aa)). The interval 312–343 (STYPDSDAGGKRGTGKDSDAGGSSFHGYSNYS) is disordered. Positions 319–330 (AGGKRGTGKDSD) are enriched in basic and acidic residues.

As to quaternary structure, interacts with UBA1A, UBA2A, UBP1A, UBP1B and UBP1C.

Its subcellular location is the nucleus. In terms of biological role, acts as a component of a complex regulating the turnover of mRNAs in the nucleus. Binds with high affinity to RNA molecules that contain U-rich sequences in 3'-UTRs. May function in complex with UBP1 and contribute to the stabilization of mRNAs in the nucleus. However, unlike UBP1, UBA1A does not stimulate pre-mRNA splicing. The sequence is that of UBP1-associated proteins 1A (UBA1A) from Arabidopsis thaliana (Mouse-ear cress).